Here is a 271-residue protein sequence, read N- to C-terminus: Ribosomal RNA small subunit methyltransferase A (271 aa).

The S-adenosyl-L-methionine site is built by His11, Leu13, Gly38, Glu59, Asp84, and Asn109.

It belongs to the class I-like SAM-binding methyltransferase superfamily. rRNA adenine N(6)-methyltransferase family. RsmA subfamily.

The protein resides in the cytoplasm. It carries out the reaction adenosine(1518)/adenosine(1519) in 16S rRNA + 4 S-adenosyl-L-methionine = N(6)-dimethyladenosine(1518)/N(6)-dimethyladenosine(1519) in 16S rRNA + 4 S-adenosyl-L-homocysteine + 4 H(+). Functionally, specifically dimethylates two adjacent adenosines (A1518 and A1519) in the loop of a conserved hairpin near the 3'-end of 16S rRNA in the 30S particle. May play a critical role in biogenesis of 30S subunits. This chain is Ribosomal RNA small subunit methyltransferase A, found in Trichormus variabilis (strain ATCC 29413 / PCC 7937) (Anabaena variabilis).